The chain runs to 89 residues: UPF0223 protein BAMEG_4214 (89 aa).

Belongs to the UPF0223 family.

This Bacillus anthracis (strain CDC 684 / NRRL 3495) protein is UPF0223 protein BAMEG_4214.